Reading from the N-terminus, the 217-residue chain is Putative peroxiredoxin Q, chloroplastic (217 aa).

The N-terminal 66 residues, methionine 1–valine 66, are a transit peptide targeting the chloroplast. A Thioredoxin domain is found at valine 70–leucine 217. Residue cysteine 112 is the Cysteine sulfenic acid (-SOH) intermediate of the active site. An intrachain disulfide couples cysteine 112 to cysteine 117.

It belongs to the peroxiredoxin family. BCP/PrxQ subfamily. As to quaternary structure, monomer.

It is found in the plastid. It localises to the chloroplast thylakoid lumen. The enzyme catalyses a hydroperoxide + [thioredoxin]-dithiol = an alcohol + [thioredoxin]-disulfide + H2O. In terms of biological role, thiol-specific peroxidase that catalyzes the reduction of hydrogen peroxide and organic hydroperoxides to water and alcohols, respectively. Plays a role in cell protection against oxidative stress by detoxifying peroxides. This is Putative peroxiredoxin Q, chloroplastic from Oryza sativa subsp. indica (Rice).